The following is a 501-amino-acid chain: Lysine--tRNA ligase (501 aa).

The Mg(2+) site is built by Glu-412 and Glu-419.

Belongs to the class-II aminoacyl-tRNA synthetase family. As to quaternary structure, homodimer. Mg(2+) serves as cofactor.

Its subcellular location is the cytoplasm. It carries out the reaction tRNA(Lys) + L-lysine + ATP = L-lysyl-tRNA(Lys) + AMP + diphosphate. The sequence is that of Lysine--tRNA ligase from Chlorobium luteolum (strain DSM 273 / BCRC 81028 / 2530) (Pelodictyon luteolum).